Reading from the N-terminus, the 71-residue chain is General transcription and DNA repair factor IIH subunit TFB5 (71 aa).

Belongs to the TFB5 family. As to quaternary structure, component of the 7-subunit TFIIH core complex composed of XPB, XPD, TFB1/GTF2H1, GTF2H2/P44, TFB4/GTF2H3, TFB2/GTF2H4 and TFB5/GTF2H5, which is active in NER. The core complex associates with the 3-subunit CDK-activating kinase (CAK) module composed of CYCH1/cyclin H1, CDKD and MAT1/At4g30820 to form the 10-subunit holoenzyme (holo-TFIIH) active in transcription.

The protein resides in the nucleus. Its function is as follows. Component of the general transcription and DNA repair factor IIH (TFIIH) core complex, which is involved in general and transcription-coupled nucleotide excision repair (NER) of damaged DNA and, when complexed to CAK, in RNA transcription by RNA polymerase II. In NER, TFIIH acts by opening DNA around the lesion to allow the excision of the damaged oligonucleotide and its replacement by a new DNA fragment. In transcription, TFIIH has an essential role in transcription initiation. When the pre-initiation complex (PIC) has been established, TFIIH is required for promoter opening and promoter escape. Phosphorylation of the C-terminal tail (CTD) of the largest subunit of RNA polymerase II by the kinase module CAK controls the initiation of transcription. The sequence is that of General transcription and DNA repair factor IIH subunit TFB5 from Arabidopsis thaliana (Mouse-ear cress).